The following is a 4239-amino-acid chain: Tenellin synthetase (4239 aa).

The region spanning 15 to 454 is the Ketosynthase family 3 (KS3) domain; that stretch reads SEPIAIIGSA…GTNAHAIIER (440 aa). Catalysis depends on for beta-ketoacyl synthase activity residues cysteine 189, histidine 326, and histidine 374. Residues 589–923 are malonyl-CoA:ACP transacylase (MAT) domain; the sequence is VFTGQGAQWP…ANDAVAFSTA (335 aa). The N-terminal hotdog fold stretch occupies residues 993 to 1135; sequence HELLGRRTPD…GRIAVQLGAK (143 aa). The dehydratase (DH) domain stretch occupies residues 993–1310; the sequence is HELLGRRTPD…GFEVRAVGEP (318 aa). Positions 993–1313 constitute a PKS/mFAS DH domain; it reads HELLGRRTPD…VRAVGEPDAS (321 aa). Histidine 1025 acts as the Proton acceptor; for dehydratase activity in catalysis. Residues 1158-1313 form a C-terminal hotdog fold region; that stretch reads LQQLDCEKLY…VRAVGEPDAS (156 aa). The active-site Proton donor; for dehydratase activity is the aspartate 1217. The tract at residues 1459-1652 is methyltransferase (MT) domain; sequence RLYTEDKGMH…FSGVDHIVHD (194 aa). Positions 2209 to 2382 are ketoreductase (KR) domain; sequence TYLMVGAAGG…AASIIHVGHV (174 aa). The Carrier 1 domain occupies 2502-2582; that stretch reads EAAVAALKGF…QLSALAAKLA (81 aa). Serine 2542 carries the O-(pantetheine 4'-phosphoryl)serine modification. Disordered stretches follow at residues 2587 to 2629 and 2642 to 2712; these read KKRA…EIAQ and LEAS…FFTQ. Composition is skewed to polar residues over residues 2648–2662 and 2670–2681; these read GGSSTANLTTSSSVS and ESTLQSSDNNGE. Positions 2682–2698 are enriched in low complexity; sequence STPSKSSNCNSDSGSDN. The condensation (C) domain stretch occupies residues 2723-3169; it reads REAPMSPAQS…SAQSVGDCVV (447 aa). Residues 3203–3614 are adenylation (A) (KR) domain; that stretch reads CQQHSTKSAI…DGTLLCFGRI (412 aa). A disordered region spans residues 3728–3752; it reads EAAAATSPSNNNINNNTPSGGGGEK. The segment covering 3729 to 3745 has biased composition (low complexity); it reads AAAATSPSNNNINNNTP. One can recognise a Carrier 2 domain in the interval 3751 to 3835; the sequence is EKMTVRQGEL…GMARCVAEQR (85 aa). Position 3795 is an O-(pantetheine 4'-phosphoryl)serine (serine 3795). Positions 3862–3892 are disordered; sequence EKLQHSSASSSSSSSSSSSAGSSSTQRPRKT. Residues 3867–3885 show a composition bias toward low complexity; it reads SSASSSSSSSSSSSAGSSS. The interval 3899–4145 is reductase (RED) domain; that stretch reads LTGATGFLGG…LDFGQVDKVV (247 aa).

The protein in the C-terminal section; belongs to the NRP synthetase family.

The protein operates within secondary metabolite biosynthesis. In terms of biological role, hybrid PKS-NRPS synthetase; part of the gene cluster that mediates the biosynthesis of tenellin-type 2-pyridones, iron-chelating compounds involved in iron stress tolerance, competition with the natural competitor fungus Metarhizium robertsii and insect hosts infection. TenS catalyzes the assembly of the polyketide-amino acid backbone. Because tenS lacks a designated enoylreductase (ER) domain, the required activity is provided the enoyl reductase tenC. Upon formation of the polyketide backbone on the thiotemplate, the triketide is transferred to the NRPS module and linked to tyrosine to produce the pyrrolidine-2-dione intermediates, including pretellinin A, 11-hydropretellenin A, 12-hydropretellenin A, 13-hydropretellenin A, 14-hydropretellenin A, 12-oxopretellenin A and prototellinin D. The pathway begins with the assembly of the polyketide-amino acid backbone by the hybrid PKS-NRPS tenS with the help of the enoyl reductase tenC. These enzymes catalyze the synthesis of the pyrrolidine-2-dione intermediates pretellinin A, 11-hydropretellenin A, 12-hydropretellenin A, 13-hydropretellenin A, 14-hydropretellenin A, 12-oxopretellenin A and prototellinin D. The cytochrome P450 monooxygenase tenA then catalyzes an oxidative ring expansion of pretenellin A and 14-hydropretellenin A to form the 2-pyridone core, leading to pretenellin B and pyridovericin, respectively. The cytochrome P450 monooxygenase tenB is then required for the selective N-hydroxylation of the 2-pyridone nitrogen of yield tellinin and 15-hydroxytellenin (15-HT), respectively. The UDP-glucosyltransferase GT1 and the methyltransferase MT1, located outside the tenS gene cluster, contribute to the stepwise glycosylation and methylation of 15-HT to obtain the glycoside pyridovericin-N-O-(4-O-methyl-beta-D-glucopyranoside) (PMGP). Additional related compounds such as 1-O-methyl-15-HT, (8Z)-1-O-methyl-15-HT, and O-methyltenellin A are also produced but the enzymes involved in their biosynthesis have still to be determined. The sequence is that of Tenellin synthetase from Beauveria bassiana (White muscardine disease fungus).